The chain runs to 122 residues: Prefoldin subunit 1 (122 aa).

The residue at position 2 (A2) is an N-acetylalanine.

This sequence belongs to the prefoldin subunit beta family. In terms of assembly, heterohexamer of two PFD-alpha type and four PFD-beta type subunits.

Binds specifically to cytosolic chaperonin (c-CPN) and transfers target proteins to it. Binds to nascent polypeptide chain and promotes folding in an environment in which there are many competing pathways for nonnative proteins. The protein is Prefoldin subunit 1 (PFDN1) of Bos taurus (Bovine).